We begin with the raw amino-acid sequence, 425 residues long: Light-independent protochlorophyllide reductase subunit N (425 aa).

3 residues coordinate [4Fe-4S] cluster: C17, C42, and C103.

The protein belongs to the BchN/ChlN family. In terms of assembly, protochlorophyllide reductase is composed of three subunits; ChlL, ChlN and ChlB. Forms a heterotetramer of two ChlB and two ChlN subunits. [4Fe-4S] cluster serves as cofactor.

The enzyme catalyses chlorophyllide a + oxidized 2[4Fe-4S]-[ferredoxin] + 2 ADP + 2 phosphate = protochlorophyllide a + reduced 2[4Fe-4S]-[ferredoxin] + 2 ATP + 2 H2O. It functions in the pathway porphyrin-containing compound metabolism; chlorophyll biosynthesis (light-independent). Functionally, component of the dark-operative protochlorophyllide reductase (DPOR) that uses Mg-ATP and reduced ferredoxin to reduce ring D of protochlorophyllide (Pchlide) to form chlorophyllide a (Chlide). This reaction is light-independent. The NB-protein (ChlN-ChlB) is the catalytic component of the complex. The protein is Light-independent protochlorophyllide reductase subunit N of Synechococcus sp. (strain CC9605).